The sequence spans 389 residues: Shewanella-like protein phosphatase 1 (389 aa).

A chloroplast-targeting transit peptide spans M1–S53. D64, H66, D102, and N137 together coordinate Mn(2+). H138 (proton donor) is an active-site residue. H242 and H314 together coordinate Mn(2+).

Belongs to the metallophosphoesterase superfamily. SLP family. The cofactor is Mn(2+). In terms of tissue distribution, expressed in rosettes leaves, shoots and flowers (at protein level).

It is found in the plastid. It localises to the chloroplast. Shows phosphatase activity, hydrolyzing the artificial substrate para-nitrophenylphosphate (pNPP) in vitro. This Arabidopsis thaliana (Mouse-ear cress) protein is Shewanella-like protein phosphatase 1.